The primary structure comprises 445 residues: Histidinol dehydrogenase (445 aa).

NAD(+) contacts are provided by tyrosine 144, glutamine 205, and asparagine 228. Substrate is bound by residues serine 251, glutamine 273, and histidine 276. Zn(2+) contacts are provided by glutamine 273 and histidine 276. Active-site proton acceptor residues include glutamate 341 and histidine 342. Histidine 342, aspartate 375, glutamate 429, and histidine 434 together coordinate substrate. Aspartate 375 is a Zn(2+) binding site. Residue histidine 434 coordinates Zn(2+).

Belongs to the histidinol dehydrogenase family. Zn(2+) serves as cofactor.

It carries out the reaction L-histidinol + 2 NAD(+) + H2O = L-histidine + 2 NADH + 3 H(+). Its pathway is amino-acid biosynthesis; L-histidine biosynthesis; L-histidine from 5-phospho-alpha-D-ribose 1-diphosphate: step 9/9. Its function is as follows. Catalyzes the sequential NAD-dependent oxidations of L-histidinol to L-histidinaldehyde and then to L-histidine. In Cupriavidus pinatubonensis (strain JMP 134 / LMG 1197) (Cupriavidus necator (strain JMP 134)), this protein is Histidinol dehydrogenase.